A 299-amino-acid polypeptide reads, in one-letter code: 4-hydroxy-tetrahydrodipicolinate synthase 2 (299 aa).

Residue Thr54 coordinates pyruvate. Residue Tyr142 is the Proton donor/acceptor of the active site. The active-site Schiff-base intermediate with substrate is the Lys170. A pyruvate-binding site is contributed by Val210.

Belongs to the DapA family. As to quaternary structure, homotetramer; dimer of dimers.

Its subcellular location is the cytoplasm. It catalyses the reaction L-aspartate 4-semialdehyde + pyruvate = (2S,4S)-4-hydroxy-2,3,4,5-tetrahydrodipicolinate + H2O + H(+). The protein operates within amino-acid biosynthesis; L-lysine biosynthesis via DAP pathway; (S)-tetrahydrodipicolinate from L-aspartate: step 3/4. Catalyzes the condensation of (S)-aspartate-beta-semialdehyde [(S)-ASA] and pyruvate to 4-hydroxy-tetrahydrodipicolinate (HTPA). In Streptomyces coelicolor (strain ATCC BAA-471 / A3(2) / M145), this protein is 4-hydroxy-tetrahydrodipicolinate synthase 2.